Here is a 735-residue protein sequence, read N- to C-terminus: Protostadienol synthase helA (735 aa).

A PFTB 1 repeat occupies 132 to 173 (KQEMCRYLLNVVNEDGGWGLFIQSPSTVFGTVMNYCMLRILG). Aspartate 463 serves as the catalytic Proton donor. 3 PFTB repeats span residues 490–531 (LQQA…YENV), 567–607 (LSRS…ACMG), and 616–663 (CQRA…AVIG).

The protein belongs to the terpene cyclase/mutase family.

The enzyme catalyses (S)-2,3-epoxysqualene = (17Z)-protosta-17(20),24-dien-3beta-ol. The protein operates within mycotoxin biosynthesis. Protostadienol synthase; part of the gene cluster that mediates the biosynthesis of helvolic acid, an antibacterial nortriterpenoid. Protostadienol synthase helA cyclizes (3S)-oxidosqualene to (17Z)-protosta-17(20),24-dien-3-beta-ol (protostadienol). The synthesis of protostadienol is followed by several steps of monooxygenation, dehydrogenation, and acyl transfer to yield the final helvolic acid. Following the cyclization to the tetracyclic protostadienol by helA, cytochrome P450 monooxygenases helB1-mediated and helB2-mediated oxidation at C-4 and C-16, acyltransferase helD2-dependent acetylation of 16-OH, oxidation of C-21 by cytochrome P450 monooxygenase helB4, and short chain dehydrogenase helC-dependent oxidative decarboxylation yield the fusidane skeleton. This intermediate is further modified in three additional steps mediated by the cytochrome P450 monooxygenase helB3, the acyltransferase helD1, and the 3-ketosteroid 1-dehydrogenase helE to give helvolic acid. Compared with the late stages in the biosynthesis of helvolic acid, enzymes involved in the early stage modifications act in a relatively strict order. The hydroxylation of C-16 by helB1 and subsequent acetylation by helD2 should occur before the helB3-mediated oxidation of C-21. C-4 demethylation in fusidane-type antibiotics proceeds in an unusual manner though it is also achieved by oxidative decarboxylation. The methyl group at C-4 beta position is oxidized by helB1 and subsequently removed by the short chain dehydrogenase helC. The protein is Protostadienol synthase helA of Aspergillus fumigatus (strain ATCC MYA-4609 / CBS 101355 / FGSC A1100 / Af293) (Neosartorya fumigata).